Here is a 96-residue protein sequence, read N- to C-terminus: ADAPPAFGMCKACHSVEAGKNGVGPSLAGVYGRKAGTLAGFKFSDPHAKSGLTWDEPTLTKYLADPKGVIPGNKMVFAGLKNPADVAAVIAYLKSL.

Cysteine 10, cysteine 13, histidine 14, and methionine 75 together coordinate heme c.

This sequence belongs to the cytochrome c family. Post-translationally, binds 1 heme c group covalently per subunit.

Its function is as follows. Cytochrome c2 is found mainly in purple, non-sulfur, photosynthetic bacteria where it functions as the electron donor to the oxidized bacteriochlorophyll in the photophosphorylation pathway. However, it may also have a role in the respiratory chain and is found in some non-photosynthetic bacteria. In Magnetospirillum fulvum (Rhodospirillum fulvum), this protein is Cytochrome c2 iso-2.